A 338-amino-acid chain; its full sequence is 1-aminocyclopropane-1-carboxylate deaminase (338 aa).

Lys-51 bears the N6-(pyridoxal phosphate)lysine mark. Ser-78 (nucleophile) is an active-site residue.

Belongs to the ACC deaminase/D-cysteine desulfhydrase family. In terms of assembly, homotrimer. Pyridoxal 5'-phosphate is required as a cofactor.

It carries out the reaction 1-aminocyclopropane-1-carboxylate + H2O = 2-oxobutanoate + NH4(+). Catalyzes a cyclopropane ring-opening reaction, the irreversible conversion of 1-aminocyclopropane-1-carboxylate (ACC) to ammonia and alpha-ketobutyrate. Allows growth on ACC as a nitrogen source. This chain is 1-aminocyclopropane-1-carboxylate deaminase, found in Variovorax paradoxus.